The following is a 235-amino-acid chain: Orotidine 5'-phosphate decarboxylase (235 aa).

Residues D17, K39, 66–75, T121, R182, Q191, G211, and R212 contribute to the substrate site; that span reads DLKLHDIGNT. The active-site Proton donor is K68.

It belongs to the OMP decarboxylase family. Type 1 subfamily. In terms of assembly, homodimer.

The enzyme catalyses orotidine 5'-phosphate + H(+) = UMP + CO2. Its pathway is pyrimidine metabolism; UMP biosynthesis via de novo pathway; UMP from orotate: step 2/2. In terms of biological role, catalyzes the decarboxylation of orotidine 5'-monophosphate (OMP) to uridine 5'-monophosphate (UMP). The sequence is that of Orotidine 5'-phosphate decarboxylase from Rhodopseudomonas palustris (strain BisB5).